We begin with the raw amino-acid sequence, 723 residues long: Probable G-protein coupled receptor 149 (723 aa).

The Extracellular portion of the chain corresponds to 1 to 31 (MSVMPSNLSLNGTSFFAENHSIMDKPNEQRT). Residues Asn-7, Asn-11, and Asn-19 are each glycosylated (N-linked (GlcNAc...) asparagine). Residues 32 to 52 (LNVFLFCSTFIIAFTVLLGSI) form a helical membrane-spanning segment. Topologically, residues 53 to 69 (YSLVSLLKLQNKSTISM) are cytoplasmic. Residues 70–90 (IVTSLSIDDLISIVPVIIFML) traverse the membrane as a helical segment. The Extracellular segment spans residues 91 to 106 (TQWSSDALPQPLCTTS). The cysteines at positions 103 and 181 are disulfide-linked. A helical transmembrane segment spans residues 107 to 127 (ALIYLFQGISSNLKGSLIVSY). At 128-148 (NFYSINKTETMNCSASKRRVS) the chain is on the cytoplasmic side. Residues 149–169 (MVWAILSIWIVSLLICILPLC) traverse the membrane as a helical segment. Over 170–188 (GWGKYIPTTWGCFTDHASS) the chain is Extracellular. Residues 189–209 (YILFLFIVYSLCFCLLTVLSV) form a helical membrane-spanning segment. The Cytoplasmic portion of the chain corresponds to 210–306 (PLTYQLLCSD…SFTVGFAQKR (97 aa)). The chain crosses the membrane as a helical span at residues 307–327 (FSLILALTKVILWLPMMIQMV). The Extracellular segment spans residues 328–338 (VQHITGYQSFS). The helical transmembrane segment at 339–359 (FETLSFLLTLLAATVTPVFVL) threads the bilayer. Topologically, residues 360 to 723 (SEHWIHLPCG…RKREEDGNSN (364 aa)) are cytoplasmic. A disordered region spans residues 451–513 (TTDSARPGPA…ERRLSHEEGH (63 aa)). Positions 501–513 (EGPERRLSHEEGH) are enriched in basic and acidic residues.

This sequence belongs to the G-protein coupled receptor 1 family. In terms of tissue distribution, specific expression in peripheral nervous system, including nerve growth factor-dependent sensory and sympathetic neurons, as well as enteric neurons.

The protein localises to the cell membrane. Its function is as follows. Orphan receptor. The sequence is that of Probable G-protein coupled receptor 149 (GPR149) from Gallus gallus (Chicken).